The chain runs to 88 residues: DASH complex subunit HSK3 (88 aa).

Residues 1 to 15 (MSSRGSGANAASRQS) are compositionally biased toward low complexity. The interval 1–24 (MSSRGSGANAASRQSMTASGGAVK) is disordered.

This sequence belongs to the DASH complex HSK3 family. In terms of assembly, component of the DASH complex consisting of ASK1, DAD1, DAD2, DAD3, DAD4, DAM1, DUO1, HSK3, SPC19 and SPC34, with a stoichiometry of one copy of each subunit per complex. Multiple DASH complexes oligomerize to form a ring that encircles spindle microtubules and organizes the rod-like NDC80 complexes of the outer kinetochore. DASH complex oligomerization strengthens microtubule attachments. On cytoplasmic microtubules, DASH complexes appear to form patches instead of rings.

The protein localises to the nucleus. It is found in the cytoplasm. It localises to the cytoskeleton. Its subcellular location is the spindle. The protein resides in the chromosome. The protein localises to the centromere. It is found in the kinetochore. In terms of biological role, component of the DASH complex that connects microtubules with kinetochores and couples microtubule depolymerisation to chromosome movement; it is involved in retrieving kinetochores to the spindle poles before their re-orientation on the spindle in early mitosis and allows microtubule depolymerization to pull chromosomes apart and resist detachment during anaphase. Kinetochores, consisting of a centromere-associated inner segment and a microtubule-contacting outer segment, play a crucial role in chromosome segregation by mediating the physical connection between centromeric DNA and microtubules. Kinetochores also serve as an input point for the spindle assembly checkpoint, which delays anaphase until all chromosomes have bioriented on the mitotic spindle. The sequence is that of DASH complex subunit HSK3 from Chaetomium thermophilum (strain DSM 1495 / CBS 144.50 / IMI 039719) (Thermochaetoides thermophila).